Here is a 206-residue protein sequence, read N- to C-terminus: Probable metallo-hydrolase MJ0888 (206 aa).

Positions 55, 57, 59, 60, 130, 147, and 190 each coordinate Zn(2+).

Belongs to the metallo-beta-lactamase superfamily. Zn(2+) is required as a cofactor.

In Methanocaldococcus jannaschii (strain ATCC 43067 / DSM 2661 / JAL-1 / JCM 10045 / NBRC 100440) (Methanococcus jannaschii), this protein is Probable metallo-hydrolase MJ0888.